Here is a 264-residue protein sequence, read N- to C-terminus: Thymidylate synthase (264 aa).

R21 provides a ligand contact to dUMP. H51 is a binding site for (6R)-5,10-methylene-5,6,7,8-tetrahydrofolate. 126 to 127 (RR) is a binding site for dUMP. C146 (nucleophile) is an active-site residue. Residues 166 to 169 (RSAD), N177, and 207 to 209 (HIY) each bind dUMP. D169 contributes to the (6R)-5,10-methylene-5,6,7,8-tetrahydrofolate binding site. A263 serves as a coordination point for (6R)-5,10-methylene-5,6,7,8-tetrahydrofolate.

Belongs to the thymidylate synthase family. Bacterial-type ThyA subfamily. As to quaternary structure, homodimer.

The protein localises to the cytoplasm. It catalyses the reaction dUMP + (6R)-5,10-methylene-5,6,7,8-tetrahydrofolate = 7,8-dihydrofolate + dTMP. It functions in the pathway pyrimidine metabolism; dTTP biosynthesis. In terms of biological role, catalyzes the reductive methylation of 2'-deoxyuridine-5'-monophosphate (dUMP) to 2'-deoxythymidine-5'-monophosphate (dTMP) while utilizing 5,10-methylenetetrahydrofolate (mTHF) as the methyl donor and reductant in the reaction, yielding dihydrofolate (DHF) as a by-product. This enzymatic reaction provides an intracellular de novo source of dTMP, an essential precursor for DNA biosynthesis. This is Thymidylate synthase from Coxiella burnetii (strain Dugway 5J108-111).